Consider the following 234-residue polypeptide: Protein SOP4 (234 aa).

The signal sequence occupies residues 1-18; the sequence is MFSQIVLLLSAFIYVVSA. At 19–188 the chain is on the lumenal side; the sequence is TARRGTIKGR…VGNILNSRWK (170 aa). Residues asparagine 35, asparagine 53, asparagine 85, asparagine 115, and asparagine 170 are each glycosylated (N-linked (GlcNAc...) asparagine). Residues 189-209 traverse the membrane as a helical segment; it reads LAGVITLIALVVFPIIVEKLD. At 210-234 the chain is on the cytoplasmic side; sequence PETARAIREEAKRKQREKYAAVASK.

The protein belongs to the SOP4 family.

It is found in the endoplasmic reticulum membrane. Its function is as follows. Involved in the export of PMA1, possibly through the monitoring or assisting of PMA1 folding and acquisition of competence to enter vesicles. This Saccharomyces cerevisiae (strain YJM789) (Baker's yeast) protein is Protein SOP4 (SOP4).